The sequence spans 64 residues: Conotoxin Pn-B01122 (64 aa).

Residues 1–22 form the signal peptide; it reads MRCLPVFVILLLLIASAPSVDA. Positions 23-48 are excised as a propeptide; sequence RPKTKDDIPLVSFQDNAKRALQILSN.

Belongs to the conotoxin T superfamily. Post-translationally, contains 2 disulfide bonds that can be either 'C1-C3, C2-C4' or 'C1-C4, C2-C3', since these disulfide connectivities have been observed for conotoxins with cysteine framework V (for examples, see AC P0DQQ7 and AC P81755). In terms of tissue distribution, expressed by the venom duct.

The protein resides in the secreted. The polypeptide is Conotoxin Pn-B01122 (Conus pennaceus (Feathered cone)).